A 598-amino-acid chain; its full sequence is Aspartate--tRNA(Asp/Asn) ligase (598 aa).

Glu177 provides a ligand contact to L-aspartate. The tract at residues 201-204 (QLFK) is aspartate. Arg223 is an L-aspartate binding site. ATP contacts are provided by residues 223–225 (RDE) and Gln232. His456 serves as a coordination point for L-aspartate. Residue Glu493 coordinates ATP. Arg500 contacts L-aspartate. Residue 545 to 548 (GLDR) coordinates ATP.

It belongs to the class-II aminoacyl-tRNA synthetase family. Type 1 subfamily. Homodimer.

Its subcellular location is the cytoplasm. It catalyses the reaction tRNA(Asx) + L-aspartate + ATP = L-aspartyl-tRNA(Asx) + AMP + diphosphate. In terms of biological role, aspartyl-tRNA synthetase with relaxed tRNA specificity since it is able to aspartylate not only its cognate tRNA(Asp) but also tRNA(Asn). Reaction proceeds in two steps: L-aspartate is first activated by ATP to form Asp-AMP and then transferred to the acceptor end of tRNA(Asp/Asn). The chain is Aspartate--tRNA(Asp/Asn) ligase from Prochlorococcus marinus (strain MIT 9301).